The chain runs to 471 residues: 5-hydroxytryptamine receptor 2A (471 aa).

At 1–80 the chain is on the extracellular side; sequence MDILCEENTS…LQEKNWSALL (80 aa). Residues N8, N38, N44, N51, and N54 are each glycosylated (N-linked (GlcNAc...) asparagine). The chain crosses the membrane as a helical span at residues 81-97; sequence TAVVIILTIAGNILVIM. Topologically, residues 98–111 are cytoplasmic; it reads AVSLEKKLQNATNY. Residues 112 to 137 traverse the membrane as a helical segment; that stretch reads FLMSLAIADMLLGFLVMPVSMLTILY. Topologically, residues 138–146 are extracellular; that stretch reads GYRWPLPSK. Residues 147 to 171 form a helical membrane-spanning segment; sequence LCAVWIYLDVLFSTASIMHLCAISL. A disulfide bridge connects residues C148 and C227. Position 155 (D155) interacts with serotonin. The short motif at 172–174 is the DRY motif; important for ligand-induced conformation changes element; sequence DRY. Topologically, residues 172 to 191 are cytoplasmic; it reads DRYVAIQNPIHHSRFNSRTK. The helical transmembrane segment at 192–215 threads the bilayer; sequence AFLKIIAVWTISVGISMPIPVFGL. Topologically, residues 216 to 232 are extracellular; that stretch reads QDDSKVFKEGSCLLADD. A helical transmembrane segment spans residues 233 to 258; that stretch reads NFVLIGSFVSFFIPLTIMVITYFLTI. Over 259–322 the chain is Cytoplasmic; that stretch reads KSLQKEATLC…QSISNEQKAC (64 aa). S280 carries the post-translational modification Phosphoserine. A helical membrane pass occupies residues 323–348; it reads KVLGIVFFLFVVMWCPFFITNIMAVI. Residue N343 coordinates serotonin. A disulfide bridge connects residues C349 and C353. The Extracellular portion of the chain corresponds to 349-356; that stretch reads CKESCNED. A helical transmembrane segment spans residues 357 to 382; the sequence is VIGALLNVFVWIGYLSSAVNPLVYTL. The short motif at 376-380 is the NPxxY motif; important for ligand-induced conformation changes and signaling element; it reads NPLVY. Residues 383-471 lie on the Cytoplasmic side of the membrane; that stretch reads FNKTYRSAFS…DGVNEKVSCV (89 aa). The disordered stretch occupies residues 450 to 471; sequence KQHSEDASKDNSDGVNEKVSCV. Residues 451-465 show a composition bias toward basic and acidic residues; it reads QHSEDASKDNSDGVN. A PDZ-binding motif is present at residues 469–471; sequence SCV.

Belongs to the G-protein coupled receptor 1 family. As to quaternary structure, interacts (via C-terminus) with MPDZ and PATJ. May interact (via C-terminus) with MPP3, PRDX6, DLG4, DLG1, CASK, APBA1 and MAGI2. Interacts with GRM2 and DRD2; this may affect signaling.

The protein resides in the cell membrane. The protein localises to the cell projection. It is found in the dendrite. Its subcellular location is the axon. It localises to the cytoplasmic vesicle. The protein resides in the membrane. The protein localises to the caveola. It is found in the presynapse. Its activity is regulated as follows. G-protein coupled receptor activity is regulated by lipids: oleamide increases HTR2A-mediated activity. Functionally, G-protein coupled receptor for 5-hydroxytryptamine (serotonin). Also functions as a receptor for various drugs and psychoactive substances, including mescaline, psilocybin, 1-(2,5-dimethoxy-4-iodophenyl)-2-aminopropane (DOI) and lysergic acid diethylamide (LSD). Ligand binding causes a conformation change that triggers signaling via guanine nucleotide-binding proteins (G proteins) and modulates the activity of downstream effectors. HTR2A is coupled to G(q)/G(11) G alpha proteins and activates phospholipase C-beta, releasing diacylglycerol (DAG) and inositol 1,4,5-trisphosphate (IP3) second messengers that modulate the activity of phosphatidylinositol 3-kinase and promote the release of Ca(2+) ions from intracellular stores, respectively. Beta-arrestin family members inhibit signaling via G proteins and mediate activation of alternative signaling pathways. Affects neural activity, perception, cognition and mood. Plays a role in the regulation of behavior, including responses to anxiogenic situations and psychoactive substances. Plays a role in intestinal smooth muscle contraction, and may play a role in arterial vasoconstriction. The sequence is that of 5-hydroxytryptamine receptor 2A (HTR2A) from Macaca mulatta (Rhesus macaque).